The primary structure comprises 199 residues: Protein MM_0484 (199 aa).

Residues 5 to 196 (TEGRAAVKLA…EKEPDGEVIE (192 aa)) enclose the AMMECR1 domain.

This is Protein MM_0484 from Methanosarcina mazei (strain ATCC BAA-159 / DSM 3647 / Goe1 / Go1 / JCM 11833 / OCM 88) (Methanosarcina frisia).